The chain runs to 429 residues: Argininosuccinate lyase (429 aa).

Belongs to the lyase 1 family. Argininosuccinate lyase subfamily.

Its subcellular location is the cytoplasm. It carries out the reaction 2-(N(omega)-L-arginino)succinate = fumarate + L-arginine. The protein operates within amino-acid biosynthesis; L-arginine biosynthesis; L-arginine from L-ornithine and carbamoyl phosphate: step 3/3. This chain is Argininosuccinate lyase, found in Pyrobaculum islandicum (strain DSM 4184 / JCM 9189 / GEO3).